A 942-amino-acid polypeptide reads, in one-letter code: UvrABC system protein A (942 aa).

32–39 lines the ATP pocket; it reads GLSGSGKS. The C4-type zinc-finger motif lies at 251–278; the sequence is CPVCGFTVPELEPRLFSFNAPFGSCPTC. ABC transporter domains are found at residues 308–589 and 609–937; these read WNPI…KKSI and GNGR…HYLK. 641-648 lines the ATP pocket; that stretch reads GVSGSGKS. The C4-type zinc-finger motif lies at 740–766; that stretch reads CEACSGDGIIKIEMHFLPDVYVPCEVC.

This sequence belongs to the ABC transporter superfamily. UvrA family. As to quaternary structure, forms a heterotetramer with UvrB during the search for lesions.

The protein localises to the cytoplasm. The UvrABC repair system catalyzes the recognition and processing of DNA lesions. UvrA is an ATPase and a DNA-binding protein. A damage recognition complex composed of 2 UvrA and 2 UvrB subunits scans DNA for abnormalities. When the presence of a lesion has been verified by UvrB, the UvrA molecules dissociate. This Streptococcus pyogenes serotype M6 (strain ATCC BAA-946 / MGAS10394) protein is UvrABC system protein A.